A 478-amino-acid polypeptide reads, in one-letter code: Proline--tRNA ligase (478 aa).

This sequence belongs to the class-II aminoacyl-tRNA synthetase family. ProS type 3 subfamily. As to quaternary structure, homodimer.

It localises to the cytoplasm. The catalysed reaction is tRNA(Pro) + L-proline + ATP = L-prolyl-tRNA(Pro) + AMP + diphosphate. In terms of biological role, catalyzes the attachment of proline to tRNA(Pro) in a two-step reaction: proline is first activated by ATP to form Pro-AMP and then transferred to the acceptor end of tRNA(Pro). The chain is Proline--tRNA ligase from Clostridium novyi (strain NT).